The following is a 388-amino-acid chain: LL-diaminopimelate aminotransferase (388 aa).

Residues Tyr13, Gly38, Lys102, Tyr126, and Asn176 each contribute to the substrate site. Pyridoxal 5'-phosphate-binding positions include 101–102, Tyr126, Asn176, Tyr207, and 235–237; these read SK and SLS. Lys238 bears the N6-(pyridoxal phosphate)lysine mark. Arg246 lines the pyridoxal 5'-phosphate pocket. Residue Arg364 coordinates substrate.

It belongs to the class-I pyridoxal-phosphate-dependent aminotransferase family. LL-diaminopimelate aminotransferase subfamily. In terms of assembly, homodimer. Pyridoxal 5'-phosphate serves as cofactor.

The enzyme catalyses (2S,6S)-2,6-diaminopimelate + 2-oxoglutarate = (S)-2,3,4,5-tetrahydrodipicolinate + L-glutamate + H2O + H(+). It functions in the pathway amino-acid biosynthesis; L-lysine biosynthesis via DAP pathway; LL-2,6-diaminopimelate from (S)-tetrahydrodipicolinate (aminotransferase route): step 1/1. In terms of biological role, involved in the synthesis of meso-diaminopimelate (m-DAP or DL-DAP), required for both lysine and peptidoglycan biosynthesis. Catalyzes the direct conversion of tetrahydrodipicolinate to LL-diaminopimelate. The protein is LL-diaminopimelate aminotransferase of Dehalococcoides mccartyi (strain CBDB1).